The primary structure comprises 614 residues: Vitamin B12 transporter BtuB (614 aa).

The N-terminal stretch at 1–20 is a signal peptide; it reads MIKKASLLTACSVTAFSAWA. A TonB box motif is present at residues 26–33; sequence DTLVVTAN. The TBDR plug domain occupies 38 to 152; the sequence is PRSTVLAPTT…IGGVVNIITT (115 aa). Residues Leu-83, Ser-85, Asn-92, and 110–111 each bind cyanocob(III)alamin; that span reads VS. One can recognise a TBDR beta-barrel domain in the interval 155-614; that stretch reads HPGTEISAGW…EYTLXGSYTF (460 aa). Beta stranded transmembrane passes span 158–165, 169–178, and 184–195; these read TEISAGWG, YQNYDVSTQQ, and TRVTLLGDYAHT. Residues Asp-199, Gln-211, Asp-213, and Asp-215 each contribute to the Ca(2+) site. 2 beta stranded membrane passes run 217-227 and 232-248; these read FLSKTLYGALE and DAWS…NRTN. Residues Tyr-249 and Asp-250 each coordinate Ca(2+). Ala-251 provides a ligand contact to cyanocob(III)alamin. A Ca(2+)-binding site is contributed by Asp-261. A run of 14 beta stranded transmembrane segments spans residues 263-277, 279-296, 309-325, 328-337, 353-369, 371-381, 385-400, 403-417, 434-443, 449-458, 473-490, 494-509, 517-529, and 535-550; these read RKLY…LRYN, ELIK…KDYN, TLDE…NNII, HGNIGAGVDW, YDQR…QQVG, FTFEGAGRSDD, FGRH…WEFI, YRFI…KAPN, KSKQWEGAFE, VNWRISGYRN, YYNE…TANF, PLTH…ARNA, RRAK…QLDW, and DWGI…YDKD. Thr-309 serves as a coordination point for cyanocob(III)alamin. Residue Arg-517 coordinates cyanocob(III)alamin. Tyr-551 provides a ligand contact to cyanocob(III)alamin. The next 3 beta stranded transmembrane spans lie at 558–572, 585–596, and 602–614; these read TVKM…LAVA, IANLFDKDYETV, and AGRE…SYTF. Positions 597 to 614 match the TonB C-terminal box motif; sequence YGYQTAGREYTLXGSYTF.

The protein belongs to the TonB-dependent receptor family. BtuB (TC 1.B.14.3.1) subfamily.

It localises to the cell outer membrane. Its function is as follows. Involved in the active translocation of vitamin B12 (cyanocobalamin) across the outer membrane to the periplasmic space. It derives its energy for transport by interacting with the trans-periplasmic membrane protein TonB. The chain is Vitamin B12 transporter BtuB from Escherichia coli O6:H1 (strain CFT073 / ATCC 700928 / UPEC).